The chain runs to 508 residues: Photosystem II CP47 reaction center protein (508 aa).

6 consecutive transmembrane segments (helical) span residues 21-36 (SVHL…WAGS), 101-115 (IILS…IWHW), 140-156 (GIHL…FGAF), 203-218 (IAAG…FHLS), 237-252 (VLSS…AFVV), and 457-472 (TFAL…HGAR).

Belongs to the PsbB/PsbC family. PsbB subfamily. PSII is composed of 1 copy each of membrane proteins PsbA, PsbB, PsbC, PsbD, PsbE, PsbF, PsbH, PsbI, PsbJ, PsbK, PsbL, PsbM, PsbT, PsbX, PsbY, PsbZ, Psb30/Ycf12, at least 3 peripheral proteins of the oxygen-evolving complex and a large number of cofactors. It forms dimeric complexes. It depends on Binds multiple chlorophylls. PSII binds additional chlorophylls, carotenoids and specific lipids. as a cofactor.

The protein localises to the plastid. It is found in the chloroplast thylakoid membrane. Its function is as follows. One of the components of the core complex of photosystem II (PSII). It binds chlorophyll and helps catalyze the primary light-induced photochemical processes of PSII. PSII is a light-driven water:plastoquinone oxidoreductase, using light energy to abstract electrons from H(2)O, generating O(2) and a proton gradient subsequently used for ATP formation. The protein is Photosystem II CP47 reaction center protein of Adiantum capillus-veneris (Maidenhair fern).